A 191-amino-acid polypeptide reads, in one-letter code: Fe/S biogenesis protein NfuA (191 aa).

Residues Cys149 and Cys152 each contribute to the [4Fe-4S] cluster site.

This sequence belongs to the NfuA family. Homodimer. The cofactor is [4Fe-4S] cluster.

Its function is as follows. Involved in iron-sulfur cluster biogenesis. Binds a 4Fe-4S cluster, can transfer this cluster to apoproteins, and thereby intervenes in the maturation of Fe/S proteins. Could also act as a scaffold/chaperone for damaged Fe/S proteins. The sequence is that of Fe/S biogenesis protein NfuA from Serratia proteamaculans (strain 568).